A 62-amino-acid polypeptide reads, in one-letter code: Beta-defensin 10 (62 aa).

Positions 1-22 are cleaved as a signal peptide; that stretch reads MRLHHLLLLLLLVVLSSGSGFT. The residue at position 23 (Gln23) is a Pyrrolidone carboxylic acid. 3 disulfides stabilise this stretch: Cys31–Cys60, Cys38–Cys53, and Cys43–Cys61.

The protein belongs to the beta-defensin family. As to expression, neutrophilic granules.

It is found in the secreted. Functionally, has bactericidal activity. Active against E.coli ML35 and S.aureus 502A. The protein is Beta-defensin 10 (DEFB10) of Bos taurus (Bovine).